We begin with the raw amino-acid sequence, 587 residues long: Arginine--tRNA ligase (587 aa).

The 'HIGH' region signature appears at 126-136; sequence ANPTGPLHVGH.

The protein belongs to the class-I aminoacyl-tRNA synthetase family. In terms of assembly, monomer.

It is found in the cytoplasm. It catalyses the reaction tRNA(Arg) + L-arginine + ATP = L-arginyl-tRNA(Arg) + AMP + diphosphate. The sequence is that of Arginine--tRNA ligase from Aromatoleum aromaticum (strain DSM 19018 / LMG 30748 / EbN1) (Azoarcus sp. (strain EbN1)).